The chain runs to 411 residues: SKA complex subunit 3 (411 aa).

Serine 34, serine 119, serine 138, serine 154, and serine 158 each carry phosphoserine. The binds the NDC80 complex stretch occupies residues 102–410 (YQARDKEDSG…GTRGAANKEN (309 aa)). Phosphothreonine occurs at positions 189 and 216. A binds microtubules and contacts the microtubule-binding domain of SKA1 region spans residues 195 to 410 (PSVQVLKTPR…GTRGAANKEN (216 aa)). Position 289 is a phosphoserine (serine 289). Position 297 is a phosphothreonine (threonine 297). Phosphoserine occurs at positions 324 and 352. The required for localization to kinetochores stretch occupies residues 349–410 (EPPSSAITSC…GTRGAANKEN (62 aa)). The residue at position 363 (threonine 363) is a Phosphothreonine.

Belongs to the SKA3 family. In terms of assembly, component of the SKA complex, composed of SKA1, SKA2 and SKA3. The SKA complex is a homodimer organized around a central W-shaped coiled-coil structure, formed by the interacting domains of SKA1, SKA2, and SKA3, each end of the 'W' is extended further by the C-terminal microtubule-binding domains of SKA1 and SKA3; the complex forms extended structures on microtubules. Interacts with the NDC80-NUF2 heterodimer of the NDC80 complex (via coiled coils); the interaction localizes the SKA complex to the kinetochore and is required to establish kinetochore-microtubule end-on attachments. Interacts with polo-like kinase PLK1.

It localises to the cytoplasm. Its subcellular location is the cytoskeleton. The protein localises to the spindle. It is found in the chromosome. The protein resides in the centromere. It localises to the kinetochore. Its subcellular location is the microtubule organizing center. The protein localises to the centrosome. Its function is as follows. Component of the SKA complex, a microtubule plus end-binding complex of the outer kinetochore that stabilizes spindle microtubule-kinetochore attachments, promotes alignment of chromosomes at the mitotic spindle equator (chromosome congression) and assists suppression of the spindle assembly checkpoint. Kinetochores, consisting of a centromere-associated inner segment and a microtubule-contacting outer segment, play a crucial role in chromosome segregation by mediating the physical connection between centromeric DNA and spindle microtubules. The outer kinetochore is made up of the ten-subunit KMN network complex, comprising the MIS12, NDC80 and KNL1 complexes, and auxiliary microtubule-associated components such as the SKA complex; together they connect the outer kinetochore with the inner kinetochore, bind microtubules, and mediate interactions with mitotic checkpoint proteins that delay anaphase until chromosomes are bioriented on the spindle. The SKA complex is loaded onto bioriented kinetochores and it facilitates chromosome congression by stabilizing microtubules together with MAPRE1, and end-on attachment of the NDC80 complex to depolymerizing spindle microtubules, thereby assisting the poleward-moving kinetochore in withstanding microtubule pulling forces. The complex associates with dynamic microtubule plus-ends and can track both depolymerizing and elongating microtubules. The complex recruits protein phosphatase 1 (PP1) to the kinetochore in prometaphase and metaphase, to oppose spindle assembly checkpoint signaling and promote the onset of anaphase. Within the complex, binds microtubules but with a much lower affinity than SKA1. Promotes stability of the polo-like kinase PLK1 protein. During meiosis the SKA complex stabilizes the meiotic spindle and is required for its migration to the cortex. This chain is SKA complex subunit 3 (Ska3), found in Mus musculus (Mouse).